A 390-amino-acid chain; its full sequence is tRNA-specific 2-thiouridylase MnmA (390 aa).

Residues 33 to 40 and Met59 contribute to the ATP site; that span reads AMSGGVDS. The active-site Nucleophile is Cys131. Cys131 and Cys230 form a disulfide bridge. An ATP-binding site is contributed by Gly155. The interaction with tRNA stretch occupies residues 180 to 182; sequence KDQ. Residue Cys230 is the Cysteine persulfide intermediate of the active site.

This sequence belongs to the MnmA/TRMU family.

Its subcellular location is the cytoplasm. The enzyme catalyses S-sulfanyl-L-cysteinyl-[protein] + uridine(34) in tRNA + AH2 + ATP = 2-thiouridine(34) in tRNA + L-cysteinyl-[protein] + A + AMP + diphosphate + H(+). Functionally, catalyzes the 2-thiolation of uridine at the wobble position (U34) of tRNA, leading to the formation of s(2)U34. The sequence is that of tRNA-specific 2-thiouridylase MnmA from Symbiobacterium thermophilum (strain DSM 24528 / JCM 14929 / IAM 14863 / T).